The sequence spans 347 residues: Protease HtpX homolog (347 aa).

4 consecutive transmembrane segments (helical) span residues valine 8–alanine 28, alanine 44–valine 64, leucine 76–alanine 96, and alanine 141–threonine 163. A Zn(2+)-binding site is contributed by histidine 174. Glutamate 175 is an active-site residue. Histidine 178 serves as a coordination point for Zn(2+). The next 2 membrane-spanning stretches (helical) occupy residues alanine 185–valine 205 and isoleucine 221–leucine 241. Glutamate 248 provides a ligand contact to Zn(2+).

The protein belongs to the peptidase M48B family. The cofactor is Zn(2+).

It localises to the cell membrane. This is Protease HtpX homolog from Pyrobaculum aerophilum (strain ATCC 51768 / DSM 7523 / JCM 9630 / CIP 104966 / NBRC 100827 / IM2).